The primary structure comprises 204 residues: ATP-dependent Clp protease proteolytic subunit 1 (204 aa).

The active-site Nucleophile is the serine 97. The active site involves histidine 122.

This sequence belongs to the peptidase S14 family. As to quaternary structure, fourteen ClpP subunits assemble into 2 heptameric rings which stack back to back to give a disk-like structure with a central cavity, resembling the structure of eukaryotic proteasomes.

The protein resides in the cytoplasm. It carries out the reaction Hydrolysis of proteins to small peptides in the presence of ATP and magnesium. alpha-casein is the usual test substrate. In the absence of ATP, only oligopeptides shorter than five residues are hydrolyzed (such as succinyl-Leu-Tyr-|-NHMec, and Leu-Tyr-Leu-|-Tyr-Trp, in which cleavage of the -Tyr-|-Leu- and -Tyr-|-Trp bonds also occurs).. Its function is as follows. Cleaves peptides in various proteins in a process that requires ATP hydrolysis. Has a chymotrypsin-like activity. Plays a major role in the degradation of misfolded proteins. The polypeptide is ATP-dependent Clp protease proteolytic subunit 1 (Nostoc sp. (strain PCC 7120 / SAG 25.82 / UTEX 2576)).